Reading from the N-terminus, the 560-residue chain is Dihydroxy-acid dehydratase (560 aa).

Residue Asp80 participates in Mg(2+) binding. Cys121 contacts [2Fe-2S] cluster. The Mg(2+) site is built by Asp122 and Lys123. Lys123 carries the post-translational modification N6-carboxylysine. Position 194 (Cys194) interacts with [2Fe-2S] cluster. Glu447 provides a ligand contact to Mg(2+). Ser473 functions as the Proton acceptor in the catalytic mechanism.

It belongs to the IlvD/Edd family. In terms of assembly, homodimer. Requires [2Fe-2S] cluster as cofactor. Mg(2+) serves as cofactor.

The catalysed reaction is (2R)-2,3-dihydroxy-3-methylbutanoate = 3-methyl-2-oxobutanoate + H2O. It carries out the reaction (2R,3R)-2,3-dihydroxy-3-methylpentanoate = (S)-3-methyl-2-oxopentanoate + H2O. It functions in the pathway amino-acid biosynthesis; L-isoleucine biosynthesis; L-isoleucine from 2-oxobutanoate: step 3/4. Its pathway is amino-acid biosynthesis; L-valine biosynthesis; L-valine from pyruvate: step 3/4. Functions in the biosynthesis of branched-chain amino acids. Catalyzes the dehydration of (2R,3R)-2,3-dihydroxy-3-methylpentanoate (2,3-dihydroxy-3-methylvalerate) into 2-oxo-3-methylpentanoate (2-oxo-3-methylvalerate) and of (2R)-2,3-dihydroxy-3-methylbutanoate (2,3-dihydroxyisovalerate) into 2-oxo-3-methylbutanoate (2-oxoisovalerate), the penultimate precursor to L-isoleucine and L-valine, respectively. This Chlorobaculum tepidum (strain ATCC 49652 / DSM 12025 / NBRC 103806 / TLS) (Chlorobium tepidum) protein is Dihydroxy-acid dehydratase.